A 659-amino-acid polypeptide reads, in one-letter code: Exoribonuclease 2 (659 aa).

One can recognise an RNB domain in the interval 189 to 531 (RENLTALHFV…NHRLIKAVLA (343 aa)). Positions 576–658 (NVEFNAEVQD…ATRSIVGEIL (83 aa)) constitute an S1 motif domain.

It belongs to the RNR ribonuclease family. RNase II subfamily.

It is found in the cytoplasm. It carries out the reaction Exonucleolytic cleavage in the 3'- to 5'-direction to yield nucleoside 5'-phosphates.. In terms of biological role, involved in mRNA degradation. Hydrolyzes single-stranded polyribonucleotides processively in the 3' to 5' direction. This is Exoribonuclease 2 from Haemophilus influenzae (strain 86-028NP).